The primary structure comprises 560 residues: Glycolate permease GlcA (560 aa).

The Cytoplasmic segment spans residues Met1–Gly13. A helical membrane pass occupies residues Leu14–Val34. Residues Leu35–Val41 are Periplasmic-facing. A helical membrane pass occupies residues Ala42–Ile62. Residues Asp63 to Ala69 lie on the Cytoplasmic side of the membrane. A helical transmembrane segment spans residues Gly70–Leu90. Topologically, residues Tyr91–Glu130 are periplasmic. A helical transmembrane segment spans residues Gly131–Phe151. Topologically, residues Lys152–Gly158 are cytoplasmic. A helical membrane pass occupies residues Leu159–Val179. Topologically, residues Ala180–Leu199 are periplasmic. Residues Pro200–Val220 form a helical membrane-spanning segment. At Lys221–Pro225 the chain is on the cytoplasmic side. A helical membrane pass occupies residues Ala226 to Gly246. Residues Pro247–Glu248 lie on the Periplasmic side of the membrane. A helical transmembrane segment spans residues Leu249–Trp269. Residues Arg270 to Pro313 lie on the Cytoplasmic side of the membrane. A helical membrane pass occupies residues Phe314–Ala334. At Pro335–Ser378 the chain is on the periplasmic side. Residues Ala379 to Ile399 form a helical membrane-spanning segment. Residues Lys400–Glu408 lie on the Cytoplasmic side of the membrane. The helical transmembrane segment at Thr409–Val429 threads the bilayer. The Periplasmic segment spans residues Thr430–Thr438. A helical transmembrane segment spans residues Leu439 to Trp459. Residues Leu460–Ser536 are Cytoplasmic-facing. The helical transmembrane segment at Leu537–Met557 threads the bilayer. Topologically, residues Leu558 to Ser560 are periplasmic.

The protein belongs to the lactate permease family.

It localises to the cell inner membrane. The enzyme catalyses glycolate(in) + H(+)(in) = glycolate(out) + H(+)(out). It carries out the reaction (S)-lactate(in) + H(+)(in) = (S)-lactate(out) + H(+)(out). It catalyses the reaction (R)-lactate(in) + H(+)(in) = (R)-lactate(out) + H(+)(out). Its activity is regulated as follows. Inhibited by the proton ionophore carbonyl cyanide m-chlorophenylhydrazone (CCCP). Its function is as follows. Uptake of glycolate across the membrane. Can also transport L-lactate and D-lactate. Seems to be driven by a proton motive force. This chain is Glycolate permease GlcA, found in Escherichia coli (strain K12).